The following is a 659-amino-acid chain: Pesticidal crystal protein Cry3Ba (659 aa).

Positions Met1–Pro41 are disordered. Residues Val22–Pro41 are compositionally biased toward polar residues.

It belongs to the delta endotoxin family.

Its function is as follows. Promotes colloidosmotic lysis by binding to the midgut epithelial cells of Coleoptera. In Bacillus thuringiensis subsp. tolworthi, this protein is Pesticidal crystal protein Cry3Ba (cry3Ba).